The primary structure comprises 2169 residues: Voltage-dependent L-type calcium channel subunit alpha-1C (2169 aa).

Residues M1–K154 lie on the Cytoplasmic side of the membrane. Positions G77–A98 are calmodulin-binding. Residues S104–T128 form a disordered region. Basic residues predominate over residues Q110–K121. One copy of the I repeat lies at N141–F438. A helical membrane pass occupies residues P155–I173. At Y174 to N188 the chain is on the extracellular side. A glycan (N-linked (GlcNAc...) asparagine) is linked at N183. The chain crosses the membrane as a helical span at residues L189–I209. Topologically, residues A210 to N218 are cytoplasmic. Residues A219–S239 form a helical membrane-spanning segment. Over A240–D262 the chain is Extracellular. Residues V263–V281 form a helical membrane-spanning segment. The Cytoplasmic segment spans residues P282–L298. Residues L299–F320 traverse the membrane as a helical segment. At M321 to A380 the chain is on the extracellular side. Disulfide bonds link C328/C356 and C346/C362. An N-linked (GlcNAc...) asparagine glycan is attached at N358. The pore-forming intramembrane region spans F381 to M402. The Selectivity filter of repeat I signature appears at T391–G394. Ca(2+) is bound at residue E393. Topologically, residues Q403–L410 are extracellular. The chain crosses the membrane as a helical span at residues P411 to L431. Residues G432 to N554 are Cytoplasmic-facing. The interval Q458–E475 is AID/alpha-interaction domain; mediates interaction with the beta subunit. Residues P479–G511 are disordered. Polar residues predominate over residues S495 to N508. Residue S499 is modified to Phosphoserine. T506 is modified (phosphothreonine). An II repeat occupies N540–L786. The chain crosses the membrane as a helical span at residues V555–S573. The Extracellular segment spans residues E574–E584. A helical membrane pass occupies residues V585–M605. Residues Y606–S616 are Cytoplasmic-facing. Residues L617–V636 traverse the membrane as a helical segment. The Extracellular portion of the chain corresponds to E637–G645. A helical transmembrane segment spans residues I646 to W664. The Cytoplasmic portion of the chain corresponds to N665–S683. The helical transmembrane segment at L684–F703 threads the bilayer. Residues G704 to P723 are Extracellular-facing. The pore-forming intramembrane region spans Q724–G745. The Selectivity filter of repeat II signature appears at T734 to D737. Residue E736 participates in Ca(2+) binding. Over I746–P755 the chain is Extracellular. A helical transmembrane segment spans residues G756–L775. The Cytoplasmic segment spans residues N776 to T930. A disordered region spans residues S794–P891. Residues S813–L836 are compositionally biased toward basic and acidic residues. Phosphoserine is present on residues S838 and S845. The segment at S859 to E906 is interaction with STAC2. Acidic residues predominate over residues A873 to E882. The III repeat unit spans residues N917–F1198. Residues I931–A949 traverse the membrane as a helical segment. Topologically, residues E950–H961 are extracellular. A helical membrane pass occupies residues I962 to K981. Topologically, residues M982–N997 are cytoplasmic. Residues Y998–I1016 form a helical membrane-spanning segment. At Q1017–V1023 the chain is on the extracellular side. The chain crosses the membrane as a helical span at residues V1024 to A1041. The Cytoplasmic segment spans residues K1042–N1060. The helical transmembrane segment at I1061–F1080 threads the bilayer. At K1081–V1130 the chain is on the extracellular side. The segment at R1118–K1207 is dihydropyridine binding. An intramembrane region (pore-forming) is located at residues L1131–Y1151. Residues T1142–G1145 carry the Selectivity filter of repeat III motif. Residue E1144 participates in Ca(2+) binding. Residues R1152–R1168 lie on the Extracellular side of the membrane. A helical membrane pass occupies residues V1169–F1190. Residues V1191–T1248 lie on the Cytoplasmic side of the membrane. One copy of the IV repeat lies at N1235–F1508. A helical transmembrane segment spans residues Y1249–Y1270. The Extracellular segment spans residues G1271–I1278. The helical transmembrane segment at A1279–I1300 threads the bilayer. Topologically, residues A1301 to D1310 are cytoplasmic. Residues A1311–T1330 traverse the membrane as a helical segment. The Extracellular portion of the chain corresponds to E1331–S1353. The helical transmembrane segment at I1354–G1372 threads the bilayer. Topologically, residues E1373–P1390 are cytoplasmic. Residues Y1391 to F1411 traverse the membrane as a helical segment. At G1412–Q1433 the chain is on the extracellular side. Residue N1417 is glycosylated (N-linked (GlcNAc...) asparagine). Positions A1434 to L1452 form an intramembrane region, pore-forming. The Selectivity filter of repeat IV signature appears at T1443–A1446. Topologically, residues A1453 to F1480 are extracellular. The tract at residues K1459–K1527 is dihydropyridine binding. A disulfide bond links C1460 and C1476. An N-linked (GlcNAc...) asparagine glycan is attached at N1468. The tract at residues E1473–W1515 is phenylalkylamine binding. Residues A1481 to M1505 form a helical membrane-spanning segment. At D1506–L2169 the chain is on the cytoplasmic side. The important for interaction with STAC1, STAC2 and STAC3 stretch occupies residues D1640–G1667. Residues D1640 to S1673 form a calmodulin-binding region. A calmodulin-binding IQ region region spans residues K1646 to Q1666. The tract at residues L1680–S1699 is important for localization in at the junctional membrane. Residues S1699 and S1720 each carry the phosphoserine modification. Composition is skewed to polar residues over residues K1761–E1770 and S1780–S1792. The disordered stretch occupies residues K1761 to N1793. Phosphoserine; by PKA is present on S1927. Residues R1970–I1998 form a disordered region. Residues F1977–T1987 show a composition bias toward pro residues.

It belongs to the calcium channel alpha-1 subunit (TC 1.A.1.11) family. CACNA1C subfamily. Component of a calcium channel complex consisting of a pore-forming alpha subunit (CACNA1C) and ancillary beta, gamma and delta subunits. The channel complex contains alpha, beta, gamma and delta subunits in a 1:1:1:1 ratio, i.e. it contains only one of each type of subunit. CACNA1C channel activity is modulated by ancillary subunits, such as CACNB1, CACNB2, CACNB3, CACNA2D1 and CACNA2D4. Interacts with the gamma subunits CACNG4, CACNG6, CACNG7 and CACNG8. Interacts with CACNB1. Interacts with CACNB2. Identified in a complex with CACNA2D4 and CACNB3. Interacts with CACNB3. Interacts with CACNA2D1. Interacts with CACNA2D4. Interacts with CALM1. Interacts (via the N-terminus and the C-terminal C and IQ motifs) with CABP1; this inhibits Ca(2+)-dependent channel inactivation. The binding via the C motif is calcium independent whereas the binding via IQ requires the presence of calcium and is mutually exclusive with calmodulin binding. The binding to the cytoplasmic N-terminal domain is calcium independent but is essential for the channel modulation. Interacts (via C-terminal CDB motif) with CABP5; in a calcium-dependent manner. Interacts with CIB1; the interaction increases upon cardiomyocytes hypertrophy. Interacts with STAC2 and STAC3; this inhibits channel inactivation. In terms of processing, phosphorylation by PKA at Ser-1927 activates the channel. Elevated levels of blood glucose lead to increased phosphorylation by PKA. Is also phosphorylated in vitro by CaM-kinase II, PKC and CGPK. Detected in hippocampus and brain cortex, on neuronal cell bodies and dendrites, and in post-synaptic density in brain (at protein level). Isoforms 4 and 5 are expressed throughout the central nervous system, with highest levels in the olfactory bulb and cerebellum. Also expressed in heart, pituitary, adrenal gland, liver, kidney, and in a much lesser extent in testes and spleen.

It localises to the cell membrane. Its subcellular location is the sarcolemma. The protein resides in the perikaryon. The protein localises to the postsynaptic density membrane. It is found in the cell projection. It localises to the dendrite. Its subcellular location is the T-tubule. It carries out the reaction Ca(2+)(in) = Ca(2+)(out). With respect to regulation, inhibited by dihydropyridines (DHP), such as isradipine. Inhibited by nifedipine. Channel activity is regulated by Ca(2+) and calmodulin. Binding of STAC1, STAC2 or STAC3 to a region that overlaps with the calmodulin binding site inhibits channel inactivation by Ca(2+) and calmodulin. Binding of calmodulin or CABP1 at the same regulatory sites results in opposite effects on the channel function. Shear stress and pressure increases calcium channel activity. Its function is as follows. Pore-forming, alpha-1C subunit of the voltage-gated calcium channel that gives rise to L-type calcium currents. Mediates influx of calcium ions into the cytoplasm, and thereby triggers calcium release from the sarcoplasm. Plays an important role in excitation-contraction coupling in the heart. Required for normal heart development and normal regulation of heart rhythm. Required for normal contraction of smooth muscle cells in blood vessels and in the intestine. Essential for normal blood pressure regulation via its role in the contraction of arterial smooth muscle cells. Long-lasting (L-type) calcium channels belong to the 'high-voltage activated' (HVA) group. This chain is Voltage-dependent L-type calcium channel subunit alpha-1C (Cacna1c), found in Rattus norvegicus (Rat).